The chain runs to 498 residues: Myotilin (498 aa).

Disordered regions lie at residues 1–46, 64–151, and 202–241; these read MFNY…QPRQ, MSSS…HEIQ, and QDDSGAQDSQQHNSEHARLQVPTSQVRSRSTSRGDVNDQD. R20 carries the post-translational modification Omega-N-methylarginine. The span at 29–43 shows a compositional bias: low complexity; that stretch reads SSFSSQTKQSSIIIQ. The span at 77–138 shows a compositional bias: polar residues; the sequence is AGSNPGQRVT…INAKPSQTAN (62 aa). The tract at residues 79 to 150 is necessary for interaction with ACTN1; the sequence is SNPGQRVTTT…PIPRTPDHEI (72 aa). The span at 202–212 shows a compositional bias: low complexity; sequence QDDSGAQDSQQ. The tract at residues 215 to 493 is necessary for interaction with FLNC; sequence SEHARLQVPT…QRLAAQSGLY (279 aa). Residues 215-498 are necessary for interaction with ACTA1; that stretch reads SEHARLQVPT…QSGLYESEEL (284 aa). The segment covering 222-235 has biased composition (polar residues); sequence VPTSQVRSRSTSRG. Ig-like C2-type domains lie at 250–335 and 349–441; these read PRFI…ATFT and PMFI…LDVT.

It belongs to the myotilin/palladin family. In terms of assembly, homodimer. Interacts with ACTA1, ACTN1, FLNA, FLNB, FLNC and MYOZ2. Interacts with the C-terminal region of MYOZ1. As to expression, expressed in skeletal muscle (at protein level). Expressed in skeletal muscle, heart, bone marrow and thyroid gland.

The protein resides in the cell membrane. It localises to the sarcolemma. Its subcellular location is the cytoplasm. The protein localises to the cytoskeleton. It is found in the myofibril. The protein resides in the sarcomere. It localises to the z line. Component of a complex of multiple actin cross-linking proteins. Involved in the control of myofibril assembly and stability at the Z lines in muscle cells. This Homo sapiens (Human) protein is Myotilin (MYOT).